The primary structure comprises 148 residues: Gastrin-releasing peptide (148 aa).

Positions 1–23 (MRGRELPLVLLALVLCLAPRGRA) are cleaved as a signal peptide. At methionine 50 the chain carries Methionine amide. Residues 54–148 (STGESSSVSE…EGRNPQLNQQ (95 aa)) constitute a propeptide that is removed on maturation. The segment at 89–148 (EAKENRNHQPPQPKALGNQQPSWDSEDSSNFKDVGSKGKVGRLSAPGSQREGRNPQLNQQ) is disordered.

Belongs to the bombesin/neuromedin-B/ranatensin family.

Its subcellular location is the secreted. It is found in the cytoplasmic vesicle. The protein resides in the secretory vesicle lumen. It localises to the cell projection. The protein localises to the neuron projection. Its function is as follows. Stimulates the release of gastrin and other gastrointestinal hormones. Contributes to the perception of prurient stimuli and to the transmission of itch signals in the spinal cord that promote scratching behavior. Contributes primarily to nonhistaminergic itch sensation. In one study, shown to act in the amygdala as part of an inhibitory network which inhibits memory specifically related to learned fear. In another study, shown to act on vasoactive intestinal peptide (VIP)-expressing cells in the auditory cortex, most likely via extrasynaptic diffusion from local and long-range sources, to mediate disinhibition of glutamatergic cells via VIP cell-specific GRPR signaling which leads to enhanced auditory fear memories. Contributes to the regulation of food intake. Inhibits voltage-gated sodium channels but enhances voltage-gated potassium channels in hippocampal neurons. Induces sighing by acting directly on the pre-Botzinger complex, a cluster of several thousand neurons in the ventrolateral medulla responsible for inspiration during respiratory activity. In terms of biological role, induces an itch response through activation of receptors present on mast cells, triggering mast cell degranulation. This Homo sapiens (Human) protein is Gastrin-releasing peptide (GRP).